Here is a 113-residue protein sequence, read N- to C-terminus: Virion membrane protein A21 homolog (113 aa).

The chain crosses the membrane as a helical; Signal-anchor for type III membrane protein span at residues 1-23 (MFVLFLIVCYFILIFNIIVPKIA). The Virion surface segment spans residues 24–113 (DKLRLEHEAF…CERAYTELFL (90 aa)).

The protein belongs to the chordopoxvirinae A21 family. Envelope protein part of a stable entry-fusion complex (EFC) which is at least composed of proteins A16, A21, A28, G3, G9, H2, J5, and L5. Formation of the viral membrane is necessary for the assembly of the complex. Post-translationally, contains two intramolecular disulfide bonds. They are created by the viral disulfide bond formation pathway, a poxvirus-specific pathway that operates on the cytoplasmic side of the MV membranes.

It localises to the virion membrane. In terms of biological role, envelope protein part of the entry-fusion complex responsible for the virus membrane fusion with host cell membrane during virus entry. The polypeptide is Virion membrane protein A21 homolog (Vertebrata (FPV)).